Consider the following 678-residue polypeptide: Protein hook (678 aa).

The segment at 1–155 (MSTQNGMYYS…NIMRALQELE (155 aa)) is interaction with microtubules. The region spanning 5-123 (NGMYYSLLEW…RLLQLVLGCA (119 aa)) is the Calponin-homology (CH) domain. Coiled coils occupy residues 135–435 (EIMC…LKCG) and 479–589 (QTAL…AKEV).

The protein belongs to the hook family. Homodimer. Interacts with microtubules via its N-terminus.

Its subcellular location is the cytoplasm. The protein resides in the cytoskeleton. The protein localises to the endosome. It localises to the synapse. Functionally, involved in endocytic trafficking by stabilizing organelles of the endocytic pathway. Probably acts as a cytoskeletal linker protein required to tether endosome vesicles to the cytoskeleton. Involved in modulation of endocytosis at stages required for down-regulation of membrane proteins that control synapse size. Not involved in synaptic vesicle recycling. Required in R7 cells for boss endocytosis into multivesicular bodies (MVBs). Has a role in regulating adult longevity. The protein is Protein hook of Drosophila virilis (Fruit fly).